The following is a 1668-amino-acid chain: Zinc finger CCCH domain-containing protein 13 (1668 aa).

Disordered regions lie at residues 1–38 (MSKI…GSTA) and 56–157 (TCRF…GDIN). Residues 10 to 23 (VENTKTISDSTSRR) show a composition bias toward polar residues. The C3H1-type zinc-finger motif lies at 36–64 (STAETQCRNWLKTGNCLYGNTCRFVHGPS). Phosphoserine occurs at positions 64 and 77. Positions 76–136 (RSPERPTGDL…IKITKERTPE (61 aa)) are enriched in basic and acidic residues. Residues lysine 179 and lysine 194 each participate in a glycyl lysine isopeptide (Lys-Gly) (interchain with G-Cter in SUMO2) cross-link. Disordered regions lie at residues 190–1112 (EIII…TATA) and 1125–1466 (AAAT…PISD). Serine 198, serine 207, serine 209, and serine 211 each carry phosphoserine. The segment covering 204 to 213 (SKLSPSPSLR) has biased composition (low complexity). A compositionally biased stretch (basic residues) spans 214-224 (KSSKSPKRKSS). Phosphothreonine is present on threonine 237. Serine 238 and serine 242 each carry phosphoserine. The segment covering 239–254 (AVSSPLLDQQRNSKTN) has biased composition (polar residues). Threonine 263 is modified (phosphothreonine). Residue serine 265 is modified to Phosphoserine. Residues 283–315 (KYKVKDRIEEKTRDGKDRGRDFERQREKRDKPR) show a composition bias toward basic and acidic residues. Phosphoserine occurs at positions 316, 318, 325, and 328. Positions 323 to 346 (HHSPISSRHHSSSSQSGSSIQRHS) are enriched in low complexity. A phosphothreonine mark is found at threonine 354 and threonine 364. Phosphoserine occurs at positions 370, 372, and 381. Positions 370–382 (SASPYPSHSLSSP) are enriched in low complexity. Basic and acidic residues-rich tracts occupy residues 394-434 (PMRE…REER) and 442-575 (SSRD…EKGS). A compositionally biased stretch (low complexity) spans 584–593 (DSHSSNSNYH). A compositionally biased stretch (basic and acidic residues) spans 594 to 640 (DSWETRSSYPERDRYPERDNRDQARDSSFERRHGERDRRDNRERDQR). Residue serine 643 is modified to Phosphoserine. The stretch at 645 to 789 (IRHQGRNDEL…RDKERERQRD (145 aa)) forms a coiled coil. The segment covering 649–821 (GRNDELERDE…NPRDGHDERK (173 aa)) has biased composition (basic and acidic residues). Residues serine 831, serine 833, serine 837, serine 845, serine 848, serine 853, serine 873, serine 875, and serine 877 each carry the phosphoserine modification. Basic and acidic residues predominate over residues 881–957 (LTEDRQGRWK…TSDRAHDENK (77 aa)). The residue at position 882 (threonine 882) is a Phosphothreonine. Serine 943 carries the post-translational modification Phosphoserine. Over residues 958 to 969 (KKAKIQKKPIKK) the composition is skewed to basic residues. The span at 970–981 (KKEDDVGIERGN) shows a compositional bias: basic and acidic residues. A phosphoserine mark is found at serine 986, serine 993, serine 1010, serine 1014, and serine 1017. Residues 996–1010 (KGQKKKSIEKKRKKS) show a composition bias toward basic residues. The residue at position 1033 (threonine 1033) is a Phosphothreonine. Over residues 1073–1083 (PDRTEVTEAEH) the composition is skewed to basic and acidic residues. Composition is skewed to low complexity over residues 1084 to 1100 (TATA…LSSL) and 1125 to 1153 (AAAT…TFAN). Residues 1163–1188 (TRVEKVETPHVTIEDAQHRKPMDQKR) show a composition bias toward basic and acidic residues. Phosphothreonine is present on threonine 1170. Phosphoserine is present on residues serine 1191, serine 1194, serine 1208, and serine 1210. Residues 1213 to 1223 (SAHRSGDDQSG) show a composition bias toward basic and acidic residues. Serine 1230 bears the Phosphoserine mark. 2 stretches are compositionally biased toward basic and acidic residues: residues 1231-1286 (GSRD…DRQV) and 1294-1379 (DSRD…DRTF). Positions 1300-1366 (QERDRYEHDR…RERERLISDS (67 aa)) form a coiled coil. Phosphoserine occurs at positions 1364, 1366, 1382, 1386, 1406, 1409, 1438, 1453, 1456, 1465, and 1466. Composition is skewed to basic and acidic residues over residues 1386 to 1421 (SVKR…DKDL) and 1429 to 1438 (ETNKSERTES).

The protein belongs to the ZC3H13 family. In terms of assembly, component of the WMM complex, a N6-methyltransferase complex composed of a catalytic subcomplex, named MAC, and of an associated subcomplex, named MACOM. The MAC subcomplex is composed of METTL3 and METTL14. The MACOM subcomplex is composed of WTAP, ZC3H13, CBLL1/HAKAI, VIRMA, and, in some cases of RBM15 (RBM15 or RBM15B). Also a component of a MACOM-like complex, named WTAP complex, composed of WTAP, ZC3H13, CBLL1/HAKAI, VIRMA, RBM15, BCLAF1 and THRAP3.

It is found in the nucleus speckle. It localises to the nucleus. The protein resides in the nucleoplasm. In terms of biological role, associated component of the WMM complex, a complex that mediates N6-methyladenosine (m6A) methylation of RNAs, a modification that plays a role in the efficiency of mRNA splicing and RNA processing. Acts as a key regulator of m6A methylation by promoting m6A methylation of mRNAs at the 3'-UTR. Controls embryonic stem cells (ESCs) pluripotency via its role in m6A methylation. In the WMM complex, anchors component of the MACOM subcomplex in the nucleus. Also required for bridging WTAP to the RNA-binding component RBM15 (RBM15 or RBM15B). The protein is Zinc finger CCCH domain-containing protein 13 of Homo sapiens (Human).